A 424-amino-acid chain; its full sequence is Na(+)/H(+) antiporter NhaP (424 aa).

A run of 12 helical transmembrane segments spans residues 3–23 (DLVA…YRFI), 25–45 (LPPT…VQGL), 66–86 (FSEV…ALHV), 96–116 (WPIG…IGGL), 130–152 (FIYC…LGIL), 170–190 (LFND…LQLG), 200–220 (ILFV…GYGV), 246–266 (ALAA…GLII), 296–316 (ALLF…WLHV), 320–340 (FALG…AILV), 358–378 (ILVW…SLPL), and 384–404 (LILS…GLSI).

It belongs to the monovalent cation:proton antiporter 1 (CPA1) transporter (TC 2.A.36) family.

The protein resides in the cell inner membrane. Its activity is regulated as follows. Inhibited by amiloride. Its function is as follows. Na(+)/H(+) antiporter that extrudes sodium in exchange for external protons. Also has weak Li(+)/H(+) antiport activity. The sequence is that of Na(+)/H(+) antiporter NhaP (nhaP) from Pseudomonas aeruginosa (strain ATCC 15692 / DSM 22644 / CIP 104116 / JCM 14847 / LMG 12228 / 1C / PRS 101 / PAO1).